An 86-amino-acid chain; its full sequence is RNA-binding protein Hfq (86 aa).

A Sm domain is found at 9–68 (DPYLNTLRKEKVPVSIYLVNGIKLQGSIESFDQFVVLLKNTVSQMVYKHAISTVVPARPV). The interval 67-86 (PVRLPSPTDGEHGDSEPGNA) is disordered. Positions 75 to 86 (DGEHGDSEPGNA) are enriched in basic and acidic residues.

It belongs to the Hfq family. As to quaternary structure, homohexamer.

Its function is as follows. RNA chaperone that binds small regulatory RNA (sRNAs) and mRNAs to facilitate mRNA translational regulation in response to envelope stress, environmental stress and changes in metabolite concentrations. Also binds with high specificity to tRNAs. In Pseudomonas putida (strain GB-1), this protein is RNA-binding protein Hfq.